A 224-amino-acid chain; its full sequence is Ribonuclease T (224 aa).

Acidic residues predominate over residues 1–11 (MSEDLYEDDLD). The interval 1 to 22 (MSEDLYEDDLDTQGSSGPRHPM) is disordered. The Exonuclease domain maps to 32 to 206 (VVVDVETGGF…YDTEKTAELF (175 aa)). Mg(2+)-binding residues include D35, E37, H193, and D198. H193 acts as the Proton donor/acceptor in catalysis.

It belongs to the RNase T family. Homodimer. Mg(2+) serves as cofactor.

Functionally, trims short 3' overhangs of a variety of RNA species, leaving a one or two nucleotide 3' overhang. Responsible for the end-turnover of tRNA: specifically removes the terminal AMP residue from uncharged tRNA (tRNA-C-C-A). Also appears to be involved in tRNA biosynthesis. The sequence is that of Ribonuclease T from Pseudomonas putida (strain ATCC 700007 / DSM 6899 / JCM 31910 / BCRC 17059 / LMG 24140 / F1).